Here is a 364-residue protein sequence, read N- to C-terminus: Dual-specificity RNA methyltransferase RlmN (364 aa).

The Proton acceptor role is filled by glutamate 93. The 239-residue stretch at 99-337 folds into the Radical SAM core domain; that stretch reads EDDRGTLCIS…ATIRKTRGDD (239 aa). A disulfide bridge connects residues cysteine 106 and cysteine 342. Residues cysteine 113, cysteine 117, and cysteine 120 each contribute to the [4Fe-4S] cluster site. S-adenosyl-L-methionine contacts are provided by residues 167-168, serine 199, 221-223, and asparagine 299; these read GE and SLH. The active-site S-methylcysteine intermediate is the cysteine 342.

Belongs to the radical SAM superfamily. RlmN family. It depends on [4Fe-4S] cluster as a cofactor.

The protein localises to the cytoplasm. It carries out the reaction adenosine(2503) in 23S rRNA + 2 reduced [2Fe-2S]-[ferredoxin] + 2 S-adenosyl-L-methionine = 2-methyladenosine(2503) in 23S rRNA + 5'-deoxyadenosine + L-methionine + 2 oxidized [2Fe-2S]-[ferredoxin] + S-adenosyl-L-homocysteine. The catalysed reaction is adenosine(37) in tRNA + 2 reduced [2Fe-2S]-[ferredoxin] + 2 S-adenosyl-L-methionine = 2-methyladenosine(37) in tRNA + 5'-deoxyadenosine + L-methionine + 2 oxidized [2Fe-2S]-[ferredoxin] + S-adenosyl-L-homocysteine. Its function is as follows. Specifically methylates position 2 of adenine 2503 in 23S rRNA and position 2 of adenine 37 in tRNAs. m2A2503 modification seems to play a crucial role in the proofreading step occurring at the peptidyl transferase center and thus would serve to optimize ribosomal fidelity. This Dichelobacter nodosus (strain VCS1703A) protein is Dual-specificity RNA methyltransferase RlmN.